The following is a 466-amino-acid chain: A-type ATP synthase subunit B (466 aa).

This sequence belongs to the ATPase alpha/beta chains family. As to quaternary structure, has multiple subunits with at least A(3), B(3), C, D, E, F, H, I and proteolipid K(x).

The protein resides in the cell membrane. Its function is as follows. Component of the A-type ATP synthase that produces ATP from ADP in the presence of a proton gradient across the membrane. The B chain is a regulatory subunit. The sequence is that of A-type ATP synthase subunit B from Metallosphaera sedula (strain ATCC 51363 / DSM 5348 / JCM 9185 / NBRC 15509 / TH2).